A 352-amino-acid chain; its full sequence is Protein Wnt-4a (352 aa).

Residues 1 to 22 (MSSEYLIRSLLMLFLALFSANA) form the signal peptide. Disulfide bonds link cysteine 78-cysteine 89, cysteine 128-cysteine 136, cysteine 138-cysteine 155, cysteine 206-cysteine 220, cysteine 208-cysteine 215, cysteine 280-cysteine 312, cysteine 297-cysteine 307, cysteine 311-cysteine 351, cysteine 327-cysteine 342, cysteine 329-cysteine 339, and cysteine 334-cysteine 335. A glycan (N-linked (GlcNAc...) asparagine) is linked at asparagine 88. A lipid anchor (O-palmitoleoyl serine; by PORCN) is attached at serine 212. Asparagine 298 carries an N-linked (GlcNAc...) asparagine glycan.

This sequence belongs to the Wnt family. Palmitoleoylation is required for efficient binding to frizzled receptors. Depalmitoleoylation leads to Wnt signaling pathway inhibition. As to expression, caudal forebrain and neural keel, the floor plate, the gill slit and the developing pronephros.

Its subcellular location is the secreted. The protein resides in the extracellular space. The protein localises to the extracellular matrix. In terms of biological role, ligand for members of the frizzled family of seven transmembrane receptors. Plays an important role in embryonic development. The polypeptide is Protein Wnt-4a (wnt4a) (Danio rerio (Zebrafish)).